We begin with the raw amino-acid sequence, 154 residues long: MQLLQVRTTNTLRRLPGTPLMPSAGAVRVVASVQSGHSWWRMWDGPTGAAEAGSCAEMLRTSAPGTSRPNLSFLLGQVIPLAHTGSVETLPSEESWGCRQRASPLPPSTAPMAVSASHRGGTGTRTWLVDPTLSRDTSPLGGQSWGSPQPSRGA.

The interval 91–154 (PSEESWGCRQ…WGSPQPSRGA (64 aa)) is disordered. The span at 134–154 (SRDTSPLGGQSWGSPQPSRGA) shows a compositional bias: polar residues.

This is an uncharacterized protein from Homo sapiens (Human).